Reading from the N-terminus, the 918-residue chain is Glutamate receptor 2.5 (918 aa).

A signal peptide spans 1-30 (MSLFHHLVSRFLSLWLLIFLVFLVLSLGKS). The Extracellular segment spans residues 31 to 586 (QKEALQVKVG…WVFLKPLTKE (556 aa)). Residues Asn46, Asn58, Asn122, Asn336, Asn340, and Asn546 are each glycosylated (N-linked (GlcNAc...) asparagine). Residues 587–607 (LWLVTAASFLYIGIMVWIFEY) traverse the membrane as a helical segment. Residues 608–616 (QADEEFREQ) lie on the Cytoplasmic side of the membrane. The chain crosses the membrane as a helical span at residues 617–637 (MIIDKISSVFYFSFSTLFFAH). Over 638–647 (RRPSESFFTR) the chain is Cytoplasmic. Residues 648–668 (VLVVVWCFVLLILTQSYTATL) traverse the membrane as a helical segment. Topologically, residues 669–828 (TSMLTVQELR…DSPIQLDHHS (160 aa)) are extracellular. N-linked (GlcNAc...) asparagine glycosylation occurs at Asn791. Residues 829–849 (FEALFLIVFVVSVILLLLMLA) form a helical membrane-spanning segment. Over 850 to 918 (SRGYQERQHN…VAPLSRLKSA (69 aa)) the chain is Cytoplasmic. Positions 857-881 (QHNASPNLPNDQANAAQEEVNEEGN) are disordered. A compositionally biased stretch (low complexity) spans 866–881 (NDQANAAQEEVNEEGN).

This sequence belongs to the glutamate-gated ion channel (TC 1.A.10.1) family. As to quaternary structure, may form heteromers. Expressed predominantly in roots.

The protein resides in the membrane. Functionally, glutamate-gated receptor that probably acts as a non-selective cation channel. May be involved in light-signal transduction and calcium homeostasis via the regulation of calcium influx into cells. This is Glutamate receptor 2.5 (GLR2.5) from Arabidopsis thaliana (Mouse-ear cress).